The primary structure comprises 194 residues: UPF0301 protein FTA_1286 (194 aa).

Belongs to the UPF0301 (AlgH) family.

The protein is UPF0301 protein FTA_1286 of Francisella tularensis subsp. holarctica (strain FTNF002-00 / FTA).